A 240-amino-acid chain; its full sequence is Eukaryotic translation initiation factor 3 subunit K (240 aa).

In terms of domain architecture, PCI spans 41 to 221 (YDKDIVLTIL…TIKTRNIDEK (181 aa)).

This sequence belongs to the eIF-3 subunit K family. Component of the eukaryotic translation initiation factor 3 (eIF-3) complex.

The protein resides in the cytoplasm. Its function is as follows. Component of the eukaryotic translation initiation factor 3 (eIF-3) complex, which is involved in protein synthesis of a specialized repertoire of mRNAs and, together with other initiation factors, stimulates binding of mRNA and methionyl-tRNAi to the 40S ribosome. The eIF-3 complex specifically targets and initiates translation of a subset of mRNAs involved in cell proliferation. In Caenorhabditis elegans, this protein is Eukaryotic translation initiation factor 3 subunit K.